The chain runs to 387 residues: Sharpin (387 aa).

The segment at 1–180 (MAPPAGGAAA…EREELAGSLA (180 aa)) is self-association. Polar residues predominate over residues 122–132 (EGQNGSKSNSP). Residues 122 to 169 (EGQNGSKSNSPPALGPEACPVSLPSPPEASTLKGPPPEADLPRSPGNL) are disordered. Ser-165 bears the Phosphoserine mark. An interaction with SHANK1 region spans residues 175–310 (LAGSLARAIA…SAPREAPATG (136 aa)). Positions 219–288 (IRLQVTLEDA…PERSLASYGV (70 aa)) constitute a Ubiquitin-like domain. The tract at residues 305–349 (EAPATGPSPQHPQKMDGELGRLFPPSLGLPPGPQPAASSLPSPLQ) is disordered. The residue at position 312 (Ser-312) is a Phosphoserine. Residues 339–349 (PAASSLPSPLQ) show a composition bias toward low complexity. A RanBP2-type zinc finger spans residues 348-377 (LQPSWSCPSCTFINAPDRPGCEMCSTQRPC).

As to quaternary structure, monomer and homodimer. Component of the LUBAC complex (linear ubiquitin chain assembly complex) which consists of SHARPIN, RBCK1 and RNF31. LUBAC has a MW of approximately 600 kDa suggesting a heteromultimeric assembly of its subunits. Associates with the TNF-R1 signaling complex (TNF-RSC) in a stimulation-dependent manner. Interacts with EYA1, EYA2, SHANK1 and SHANK3 (via ANK repeats). As to expression, highly expressed in skeletal muscle and placenta and at lower levels in brain, heart, colon without mucosa, thymus, spleen, kidney, liver, small intestine, lung and peripheral blood leukocytes. Up-regulated in various tumor tissues such as kidney, liver, ovary and pancreas tumors.

Its subcellular location is the cytoplasm. It localises to the cytosol. It is found in the synapse. It functions in the pathway protein modification; protein ubiquitination. In terms of biological role, component of the LUBAC complex which conjugates linear polyubiquitin chains in a head-to-tail manner to substrates and plays a key role in NF-kappa-B activation and regulation of inflammation. LUBAC conjugates linear polyubiquitin to IKBKG and RIPK1 and is involved in activation of the canonical NF-kappa-B and the JNK signaling pathways. Linear ubiquitination mediated by the LUBAC complex interferes with TNF-induced cell death and thereby prevents inflammation. LUBAC is recruited to the TNF-R1 signaling complex (TNF-RSC) following polyubiquitination of TNF-RSC components by BIRC2 and/or BIRC3 and to conjugate linear polyubiquitin to IKBKG and possibly other components contributing to the stability of the complex. The LUBAC complex is also involved in innate immunity by conjugating linear polyubiquitin chains at the surface of bacteria invading the cytosol to form the ubiquitin coat surrounding bacteria. LUBAC is not able to initiate formation of the bacterial ubiquitin coat, and can only promote formation of linear polyubiquitins on pre-existing ubiquitin. The bacterial ubiquitin coat acts as an 'eat-me' signal for xenophagy and promotes NF-kappa-B activation. Together with OTULIN, the LUBAC complex regulates the canonical Wnt signaling during angiogenesis. The chain is Sharpin from Homo sapiens (Human).